Reading from the N-terminus, the 268-residue chain is Phosphatidylglycerol--prolipoprotein diacylglyceryl transferase (268 aa).

The next 7 helical transmembrane spans lie at 23 to 43 (IGLRWYGLMYLLGFVFARWLA), 62 to 82 (LLFNGFMGVFIGGRVGDVFFY), 97 to 117 (VWEGGMSFHGGLIGVIVAMIW), 132 to 152 (FVAPLIPFGLGLGRIGNFINL), 179 to 199 (SQLYEAFLEGLVLFAILNIFI), 206 to 226 (ASVAGLFLIGYGVFRFIVEYV), and 241 to 261 (GQALCLPMIIGGAFIMAWAYS). Position 145 (R145) interacts with a 1,2-diacyl-sn-glycero-3-phospho-(1'-sn-glycerol).

It belongs to the Lgt family.

Its subcellular location is the cell inner membrane. The enzyme catalyses L-cysteinyl-[prolipoprotein] + a 1,2-diacyl-sn-glycero-3-phospho-(1'-sn-glycerol) = an S-1,2-diacyl-sn-glyceryl-L-cysteinyl-[prolipoprotein] + sn-glycerol 1-phosphate + H(+). It functions in the pathway protein modification; lipoprotein biosynthesis (diacylglyceryl transfer). In terms of biological role, catalyzes the transfer of the diacylglyceryl group from phosphatidylglycerol to the sulfhydryl group of the N-terminal cysteine of a prolipoprotein, the first step in the formation of mature lipoproteins. The chain is Phosphatidylglycerol--prolipoprotein diacylglyceryl transferase from Haemophilus influenzae (strain PittEE).